The primary structure comprises 81 residues: MKTLLLTLVVVTIVCLDLGNSLKCYVSREGETQTCPEGEKLCEKYAVSYFHDGRWRYRYECTSACHRGPYNVCCSTDLCNK.

The first 21 residues, 1–21 (MKTLLLTLVVVTIVCLDLGNS), serve as a signal peptide directing secretion. Intrachain disulfides connect C24-C42, C35-C61, C65-C73, and C74-C79.

Belongs to the three-finger toxin family. Short-chain subfamily. As to expression, expressed by the venom gland.

Its subcellular location is the secreted. Functionally, snake venom neurotoxin that blocks neuromuscular transmission, presenting a postsynaptic action through the nicotinic acetylcholine receptor (nAChR). Has no cytotoxic activity. The protein is Mipartoxin-1A of Micrurus mipartitus (Red-tailed coral snake).